The following is a 210-amino-acid chain: Scoloptoxin SSD558 (210 aa).

Positions 1–23 (MNILLPSTLFVLLMFQIIGSGMG) are cleaved as a signal peptide.

Post-translationally, contains 3 disulfide bonds. In terms of tissue distribution, expressed by the venom gland.

It is found in the secreted. This is Scoloptoxin SSD558 from Scolopendra dehaani (Thai centipede).